A 328-amino-acid polypeptide reads, in one-letter code: Alanine racemase (328 aa).

The active-site Proton acceptor; specific for D-alanine is lysine 33. Position 33 is an N6-(pyridoxal phosphate)lysine (lysine 33). Arginine 118 lines the substrate pocket. The Proton acceptor; specific for L-alanine role is filled by tyrosine 237. Methionine 283 lines the substrate pocket.

The protein belongs to the alanine racemase family. Pyridoxal 5'-phosphate serves as cofactor.

The enzyme catalyses L-alanine = D-alanine. Its pathway is amino-acid biosynthesis; D-alanine biosynthesis; D-alanine from L-alanine: step 1/1. Its function is as follows. Catalyzes the interconversion of L-alanine and D-alanine. May also act on other amino acids. This is Alanine racemase (alr) from Campylobacter jejuni subsp. jejuni serotype O:23/36 (strain 81-176).